The sequence spans 542 residues: Apolipoprotein N-acyltransferase (542 aa).

6 helical membrane-spanning segments follow: residues 26–46 (ASVICCMCGYGLLWRGLLSLV), 54–74 (IWCLAFFWTWSVEGFHFSWML), 89–109 (LLISYLAVTFASFSCLVVLCF), 113–133 (YWGALFWLPGVWVAIESVRYY), 163–183 (WAGQSFVVIATNLGCCSVLVF), and 187–207 (FSYGLWLVCCAFPYFLGGTYY). The CN hydrolase domain maps to 220–499 (LRVAIVQPGY…PDVLQVSVPV (280 aa)). Catalysis depends on Glu-264, which acts as the Proton acceptor. Lys-349 is a catalytic residue. Cys-404 acts as the Nucleophile in catalysis. A helical transmembrane segment spans residues 509–529 (FGDAPLLFVAVSSVLGVVGYF).

Belongs to the CN hydrolase family. Apolipoprotein N-acyltransferase subfamily.

It is found in the cell inner membrane. The enzyme catalyses N-terminal S-1,2-diacyl-sn-glyceryl-L-cysteinyl-[lipoprotein] + a glycerophospholipid = N-acyl-S-1,2-diacyl-sn-glyceryl-L-cysteinyl-[lipoprotein] + a 2-acyl-sn-glycero-3-phospholipid + H(+). It functions in the pathway protein modification; lipoprotein biosynthesis (N-acyl transfer). Functionally, catalyzes the phospholipid dependent N-acylation of the N-terminal cysteine of apolipoprotein, the last step in lipoprotein maturation. In Chlamydia muridarum (strain MoPn / Nigg), this protein is Apolipoprotein N-acyltransferase.